A 275-amino-acid polypeptide reads, in one-letter code: MAIRIFAILFSTFVFGTFAHAQEGMRERSDWRKFFSEFQAKGTIVVADERQTDRVILVFDQVRSEKRYSPASTFKIPHTLFALDAGAARDEFQVFRWDGIKRSFAAHNQDQDLRSAMRNSTVWIYELFAKEIGEDKARRYLKQIDYGNADPSTSNGDYWIDGNLAIAAQEQIAFLRKLYHNELPFRVEHQRLVKDLMIVEAGRNWILRAKTGWEGRIGWWVGWVEWPTGPVFFALNIDTPNRMDDLFKREAIVRAILRSIEALPPNPAVNSDAAR.

The first 21 residues, 1–21 (MAIRIFAILFSTFVFGTFAHA), serve as a signal peptide directing secretion. S72 functions as the Acyl-ester intermediate in the catalytic mechanism. Residue K75 is modified to N6-carboxylysine. 210–212 (KTG) lines the substrate pocket.

This sequence belongs to the class-D beta-lactamase family.

The enzyme catalyses a beta-lactam + H2O = a substituted beta-amino acid. Its function is as follows. This is an oxacillin-hydrolyzing beta-lactamase. The chain is Beta-lactamase OXA-3 (bla) from Pseudomonas aeruginosa.